The chain runs to 433 residues: IPGLSEKYTGEELYLMTTEKAAKTADICLSKLQEYFDALIAAISELEVRVPASETILRGRNVLDQIKEMLKHLQEKIRQTFVTLQEADFAGKLNRLKQVVQKTFQKAGNMVRSLQSKNFEDIKVQMQQLYKDAMASDYAHKLRSLAENVKKYISQIKNFSQKTLQKLSENLQQLVLYIKALREEYFDPTTLGWSVKYYEVEDKVLGLLKNLMDTLVIWYNEYAKDLSDLVTRLTDQVRELVENYRQEYYDLITDVEGKGRQKVMELSSAAQEKIRYWSAVAKRKINEHNRQVKAKLQEIYGQLSDSQEKLINVAKMLIDLTVEKYSTFMKYIFELLRWFEQATADSIKPYIAVREGELRIDVPFDWEYINQMPQKSREALRNKVELTRALIQQGVEQGTRKWEEMQAFIDEQLATEQLSFQQIVENIQKRMKT.

Residue Asn-158 is glycosylated (N-linked (GlcNAc...) asparagine).

It localises to the cytoplasm. It is found in the secreted. The protein localises to the lipid droplet. Its function is as follows. Apolipoprotein B is a major protein constituent of chylomicrons, VLDL and LDL. It functions as a recognition signal for the cellular binding and internalization of LDL particles by the apoB/E receptor. This is Apolipoprotein B (APOB) from Gallus gallus (Chicken).